A 190-amino-acid chain; its full sequence is COMM domain-containing protein 1 (190 aa).

Residue A2 is modified to N-acetylalanine. A sufficient for interaction with SLC12A2 region spans residues 2 to 123 (AAGELEGGKP…RWNSGLRGLS (122 aa)). Residues H101, M110, and H134 each coordinate Cu cation. Positions 118–186 (GLRGLSWRVD…EVEESISTLI (69 aa)) constitute a COMM domain. Residues 125–190 (RVDGKSQSRH…SISTLISQPN (66 aa)) are required for binding to PtdIns(4,5)P2.

It belongs to the COMM domain-containing protein 1 family. In terms of assembly, component of the commander complex consisting of the CCC subcomplex and the retriever subcomplex. Component of the CCC (COMMD/CCDC22/CCDC93) subcomplex consisting of COMMD1, COMMD2, COMMD3, COMMD4, COMMD5, COMMD6, COMMD7, COMMD8, COMMD9, COMMD10, CCDC22 and CCDC93; within the complex forms a heterodimer with COMMD6. Interacts with VPS35L; the interaction associates the CCC complex with the retriever complex. Identified in a complex with an E3 ubiquitin ligase complex composed of TCEB1/elongin C, CUL2, SOCS1 and RBX1; in the complex interacts directly with SOCS1 and CUL2. Identified in a complex with NF-kappa-B. Interacts directly with SLC12A2. Interacts directly with ATP7B (via the N-terminal region). Interacts with ATP7A. Interacts with FAM107A; this interaction stabilizes COMMD1 in the nucleus. Interacts with CCS, CDKN2A, RELA, REL, RELB, NFKB1/p105, NFKB2/p100, NFKBIB, SCNN1D, SCNN1B, CFTR, CLU, SGK1, AKT1, CUL1, CUL2, CUL3, CUL4A, CUL4B, CUL5, CUL7, HIF1A. In terms of processing, acetylated by EP300 ina stimuli-specific manner; protecting it from XIAP-mediated proteasomal degradation and required for interaction with RElA in response to stress. Ubiquitinated; undergoes both 'Lys-63'- and 'Lys-48'-linked polyubiquitination. Ubiquitinated by XIAP, leading to its proteasomal degradation. Ubiquitous. Highest expression in the liver, with lower expression in brain, lung, placenta, pancreas, small intestine, heart, skeletal muscle, kidney and placenta. Down-regulated in cancer tissues.

Its subcellular location is the nucleus. The protein localises to the cytoplasm. It localises to the endosome membrane. It is found in the cytoplasmic vesicle. The protein resides in the early endosome. Its subcellular location is the recycling endosome. Its function is as follows. Scaffold protein in the commander complex that is essential for endosomal recycling of transmembrane cargos; the commander complex is composed of the CCC subcomplex and the retriever subcomplex. Can modulate activity of cullin-RING E3 ubiquitin ligase (CRL) complexes by displacing CAND1; in vitro promotes CRL E3 activity and dissociates CAND1 from CUL1 and CUL2. Promotes ubiquitination of NF-kappa-B subunit RELA and its subsequent proteasomal degradation. Down-regulates NF-kappa-B activity. Involved in the regulation of membrane expression and ubiquitination of SLC12A2. Modulates Na(+) transport in epithelial cells by regulation of apical cell surface expression of amiloride-sensitive sodium channel (ENaC) subunits and by promoting their ubiquitination presumably involving NEDD4L. Promotes the localization of SCNN1D to recycling endosomes. Promotes CFTR cell surface expression through regulation of its ubiquitination. Down-regulates SOD1 activity by interfering with its homodimerization. Plays a role in copper ion homeostasis. Involved in copper-dependent ATP7A trafficking between the trans-Golgi network and vesicles in the cell periphery; the function is proposed to depend on its association within the CCC complex and cooperation with the WASH complex on early endosomes. Can bind one copper ion per monomer. May function to facilitate biliary copper excretion within hepatocytes. Binds to phosphatidylinositol 4,5-bisphosphate (PtdIns(4,5)P2). Involved in the regulation of HIF1A-mediated transcription; competes with ARNT/Hif-1-beta for binding to HIF1A resulting in decreased DNA binding and impaired transcriptional activation by HIF-1. Negatively regulates neuroblastoma G1/S phase cell cycle progression and cell proliferation by stimulating ubiquitination of NF-kappa-B subunit RELA and NF-kappa-B degradation in a FAM107A- and actin-dependent manner. The protein is COMM domain-containing protein 1 (COMMD1) of Homo sapiens (Human).